Here is a 201-residue protein sequence, read N- to C-terminus: MAVAIEAPFHVLAVDDSLPDRKLIERLLKTSSFQVTTVDSGSKALEFLGLHDHEDSPISTQSDQQEVGVNLIITDYCMPGMTGYDLLKKIKESSYLRDIPVVIMSSDNIPSRINRCLEEGADEFFLKPVRLSDMSKLKPHILKSRCKEHYQQEQHLQSNSESNNSSNPTSENSSSSTSTNSHKRKAVDEEILPHTIRPRHS.

The 133-residue stretch at 10-142 folds into the Response regulatory domain; that stretch reads HVLAVDDSLP…DMSKLKPHIL (133 aa). The residue at position 75 (Asp-75) is a 4-aspartylphosphate. Residues 149-201 form a disordered region; the sequence is HYQQEQHLQSNSESNNSSNPTSENSSSSTSTNSHKRKAVDEEILPHTIRPRHS. Low complexity predominate over residues 158-180; sequence SNSESNNSSNPTSENSSSSTSTN.

This sequence belongs to the ARR family. Type-A subfamily. Two-component system major event consists of a His-to-Asp phosphorelay between a sensor histidine kinase (HK) and a response regulator (RR). In plants, the His-to-Asp phosphorelay involves an additional intermediate named Histidine-containing phosphotransfer protein (HPt). This multistep phosphorelay consists of a His-Asp-His-Asp sequential transfer of a phosphate group between first a His and an Asp of the HK protein, followed by the transfer to a conserved His of the HPt protein and finally the transfer to an Asp in the receiver domain of the RR protein. Expressed in mature leaves, and at low levels in roots, shoots and flowers.

Functions as a response regulator involved in His-to-Asp phosphorelay signal transduction system. Phosphorylation of the Asp residue in the receiver domain activates the ability of the protein to promote the transcription of target genes. Type-A response regulators seem to act as negative regulators of the cytokinin signaling. This Oryza sativa subsp. indica (Rice) protein is Two-component response regulator ORR10.